We begin with the raw amino-acid sequence, 375 residues long: MDDVIKKGLSIVSELRDHGFEAYIVGGAVRDYHIGRKPKDVDVVTSASPEEIRTLYPHAFQINRQFQTLTVHLQKVAIEVSTLRGGSIEDDLCSRDFTINAMALAMNGDIIDPTGGKTDLENGVIRSFHPEARFKEDPLRMLRAPRFASELGFTVAKGTAEAIKGSCSLLADVAVERVEKELTQLMIGTHRSSGWCLLHETGLYPFIPGVSLSKETVLRMKEISRSPGLLPADGFWAILYLLENCSMKLPLAKEKKKRIRTIVHYVGERQNHSWNETMLYQASLSVATVVEQIRALFGQASVHEEELRQLWSSLPIQTRTELAVTGRDVMAHFQKKGGPWLADTLADIEEAVLLKHIENEKKSIIQWLEERRVES.

27 to 30 lines the CTP pocket; the sequence is GAVR. D40 and D42 together coordinate Mg(2+). Residues 95–96, N100, 137–146, and R177 each bind CTP; these read RD and DPLRMLRAPR.

It belongs to the tRNA nucleotidyltransferase/poly(A) polymerase family. Mg(2+) is required as a cofactor.

The catalysed reaction is a tRNA precursor + 2 CTP = a tRNA with a 3' CC end + 2 diphosphate. Its function is as follows. tRNA nucleotidyltransferase involved in the synthesis of the tRNA CCA terminus. Adds the two cytidine residues to tRNA. The protein is CC-adding tRNA nucleotidyltransferase of Halalkalibacterium halodurans (strain ATCC BAA-125 / DSM 18197 / FERM 7344 / JCM 9153 / C-125) (Bacillus halodurans).